Consider the following 146-residue polypeptide: MAYYNHQNRILARGQIWNLIGETEGLDSGRRHPACAITISNYTLLLARILWEELPFLSHEQCFHTDIFICSVTSKHISVERMKEETVKAIEMVGKVLILVPLLASLVLLLYFNITGSSAEIGCGFCLGTVILAGIVLVGYSVVRSR.

2 helical membrane passes run 89–111 (AIEM…LLLY) and 121–143 (IGCG…YSVV).

The protein localises to the cell membrane. This is an uncharacterized protein from Archaeoglobus fulgidus (strain ATCC 49558 / DSM 4304 / JCM 9628 / NBRC 100126 / VC-16).